Reading from the N-terminus, the 910-residue chain is DNA mismatch repair protein MutS (910 aa).

Residues 1–11 (MEAKVEEKEPE) are compositionally biased toward basic and acidic residues. Residues 1 to 21 (MEAKVEEKEPEPVENAGPDAP) form a disordered region. 658–665 (GPNMGGKS) is a binding site for ATP.

Belongs to the DNA mismatch repair MutS family.

This protein is involved in the repair of mismatches in DNA. It is possible that it carries out the mismatch recognition step. This protein has a weak ATPase activity. In Brucella melitensis biotype 1 (strain ATCC 23456 / CCUG 17765 / NCTC 10094 / 16M), this protein is DNA mismatch repair protein MutS.